Consider the following 283-residue polypeptide: MPAVTQPRGESKYDAIPGPLGPQSASLEGKVALVTGAGRGIGREMAMELGRRGCKVIVNYANSTESAEEVVAAIKKNGSDAACVKANVGVVEDIVRMFEEAVKIFGKLDIVCSNSGVVSFGHVKDVTPEEFDRVFTINTRGQFFVAREAYKHLEIGGRLILMGSITGQAKAVPKHAVYSGSKGAIETFARCMAIDMADKKITVNVVAPGGIKTDMYHAVCREYIPNGENLSNEEVDEYAASAWSPLHRVGLPIDIARVVCFLASNDGGWVTGKVIGIDGGACM.

The disordered stretch occupies residues 1–21 (MPAVTQPRGESKYDAIPGPLG). Residue 39–63 (RGIGREMAMELGRRGCKVIVNYANS) coordinates NADP(+). Substrate is bound at residue S164. Y178 acts as the Proton acceptor in catalysis.

It belongs to the short-chain dehydrogenases/reductases (SDR) family. Homotetramer.

It carries out the reaction scytalone + NADP(+) = naphthalene-1,3,6,8-tetrol + NADPH + H(+). It functions in the pathway pigment biosynthesis; melanin biosynthesis. Functionally, catalyzes the NADPH-dependent reduction of 1,3,6,8-tetrahydroxynaphthalene (T4HN) into (+)-scytalone and 1,3,8-trihydroxynaphthalene into (-)-vermelone. This enzyme is the biochemical target of several commercially important fungicides which are used to prevent blast disease in rice plants. The chain is Tetrahydroxynaphthalene reductase from Pyricularia oryzae (strain 70-15 / ATCC MYA-4617 / FGSC 8958) (Rice blast fungus).